The primary structure comprises 103 residues: Small ribosomal subunit protein uS10 (103 aa).

This sequence belongs to the universal ribosomal protein uS10 family. In terms of assembly, part of the 30S ribosomal subunit.

Functionally, involved in the binding of tRNA to the ribosomes. This chain is Small ribosomal subunit protein uS10, found in Methylibium petroleiphilum (strain ATCC BAA-1232 / LMG 22953 / PM1).